The chain runs to 476 residues: Aspartyl/glutamyl-tRNA(Asn/Gln) amidotransferase subunit B (476 aa).

The protein belongs to the GatB/GatE family. GatB subfamily. In terms of assembly, heterotrimer of A, B and C subunits.

It catalyses the reaction L-glutamyl-tRNA(Gln) + L-glutamine + ATP + H2O = L-glutaminyl-tRNA(Gln) + L-glutamate + ADP + phosphate + H(+). The enzyme catalyses L-aspartyl-tRNA(Asn) + L-glutamine + ATP + H2O = L-asparaginyl-tRNA(Asn) + L-glutamate + ADP + phosphate + 2 H(+). In terms of biological role, allows the formation of correctly charged Asn-tRNA(Asn) or Gln-tRNA(Gln) through the transamidation of misacylated Asp-tRNA(Asn) or Glu-tRNA(Gln) in organisms which lack either or both of asparaginyl-tRNA or glutaminyl-tRNA synthetases. The reaction takes place in the presence of glutamine and ATP through an activated phospho-Asp-tRNA(Asn) or phospho-Glu-tRNA(Gln). This chain is Aspartyl/glutamyl-tRNA(Asn/Gln) amidotransferase subunit B, found in Clostridium botulinum (strain Loch Maree / Type A3).